The primary structure comprises 144 residues: Cytochrome c oxidase subunit 4 isoform 1, mitochondrial (144 aa).

Residues 1–73 are Mitochondrial matrix-facing; sequence SVVKSEDFSL…SFAEMNRGSN (73 aa). Lys4 carries the post-translational modification N6-acetyllysine; alternate. Position 4 is an N6-succinyllysine; alternate (Lys4). Lys28 bears the N6-acetyllysine mark. A phosphoserine mark is found at Ser31 and Ser33. The residue at position 35 (Lys35) is an N6-acetyllysine; alternate. Position 35 is an N6-succinyllysine; alternate (Lys35). Lys42 carries the post-translational modification N6-acetyllysine. Residues 74 to 99 traverse the membrane as a helical segment; sequence EWKTVVGGAMFFIGFTALIIMWQKRH. Topologically, residues 100-144 are mitochondrial intermembrane; the sequence is VYGPLPQSFDKEWVAKQTKRMLDMKVNPIQGLASKWDYEKNEWKK.

This sequence belongs to the cytochrome c oxidase IV family. In terms of assembly, component of the cytochrome c oxidase (complex IV, CIV), a multisubunit enzyme composed of 14 subunits. The complex is composed of a catalytic core of 3 subunits MT-CO1, MT-CO2 and MT-CO3, encoded in the mitochondrial DNA, and 11 supernumerary subunits COX4I, COX5A, COX5B, COX6A, COX6B, COX6C, COX7A, COX7B, COX7C, COX8 and NDUFA4, which are encoded in the nuclear genome. The complex exists as a monomer or a dimer and forms supercomplexes (SCs) in the inner mitochondrial membrane with NADH-ubiquinone oxidoreductase (complex I, CI) and ubiquinol-cytochrome c oxidoreductase (cytochrome b-c1 complex, complex III, CIII), resulting in different assemblies (supercomplex SCI(1)III(2)IV(1) and megacomplex MCI(2)III(2)IV(2)). Interacts with PHB2; the interaction decreases in absence of SPHK2. Interacts with AFG1L. Interacts with ABCB7; this interaction allows the regulation of cellular iron homeostasis and cellular reactive oxygen species (ROS) levels in cardiomyocytes. Interacts with FLVCR2; this interaction occurs in the absence of heme and is disrupted upon heme binding. Interacts with IRGC.

The protein resides in the mitochondrion inner membrane. The protein operates within energy metabolism; oxidative phosphorylation. Functionally, component of the cytochrome c oxidase, the last enzyme in the mitochondrial electron transport chain which drives oxidative phosphorylation. The respiratory chain contains 3 multisubunit complexes succinate dehydrogenase (complex II, CII), ubiquinol-cytochrome c oxidoreductase (cytochrome b-c1 complex, complex III, CIII) and cytochrome c oxidase (complex IV, CIV), that cooperate to transfer electrons derived from NADH and succinate to molecular oxygen, creating an electrochemical gradient over the inner membrane that drives transmembrane transport and the ATP synthase. Cytochrome c oxidase is the component of the respiratory chain that catalyzes the reduction of oxygen to water. Electrons originating from reduced cytochrome c in the intermembrane space (IMS) are transferred via the dinuclear copper A center (CU(A)) of subunit 2 and heme A of subunit 1 to the active site in subunit 1, a binuclear center (BNC) formed by heme A3 and copper B (CU(B)). The BNC reduces molecular oxygen to 2 water molecules using 4 electrons from cytochrome c in the IMS and 4 protons from the mitochondrial matrix. This chain is Cytochrome c oxidase subunit 4 isoform 1, mitochondrial (COX4I1), found in Pongo pygmaeus (Bornean orangutan).